The chain runs to 354 residues: Protein Wnt-11 (354 aa).

A signal peptide spans 1–24 (MKPSPQFLLAAFLSLILQTGICYG). Residues asparagine 40 and asparagine 90 are each glycosylated (N-linked (GlcNAc...) asparagine). Intrachain disulfides connect cysteine 80/cysteine 91, cysteine 130/cysteine 138, cysteine 140/cysteine 157, cysteine 209/cysteine 223, cysteine 211/cysteine 218, cysteine 283/cysteine 314, cysteine 299/cysteine 309, cysteine 313/cysteine 353, cysteine 329/cysteine 344, cysteine 331/cysteine 341, and cysteine 336/cysteine 337. Serine 215 is lipidated: O-palmitoleoyl serine; by PORCN. N-linked (GlcNAc...) asparagine glycosylation is found at asparagine 300 and asparagine 304.

This sequence belongs to the Wnt family. Palmitoleoylation is required for efficient binding to frizzled receptors. Depalmitoleoylation leads to Wnt signaling pathway inhibition.

Its subcellular location is the secreted. It is found in the extracellular space. The protein localises to the extracellular matrix. Functionally, ligand for members of the frizzled family of seven transmembrane receptors. May play a role in the formation of dermal structure, both limb and feather buds. Is likely to signal over only few cell diameters. This chain is Protein Wnt-11 (WNT11), found in Coturnix japonica (Japanese quail).